Here is a 251-residue protein sequence, read N- to C-terminus: Prolactin-7C1 (251 aa).

Positions 1–30 (MLLSLTHPSFLAMLPMLLMSNLLQWEGVTS) are cleaved as a signal peptide. A glycan (N-linked (GlcNAc...) asparagine) is linked at Asn-57. 2 cysteine pairs are disulfide-bonded: Cys-101-Cys-217 and Cys-234-Cys-242.

Belongs to the somatotropin/prolactin family. Expressed exclusively in the placenta. Expressed in spongiotrophoblast cells and trophoblast giant cells of the junctional zone and in labyrinthine trophoblast.

The protein resides in the secreted. In Mus musculus (Mouse), this protein is Prolactin-7C1 (Prl7c1).